Consider the following 446-residue polypeptide: Glucose-6-phosphate isomerase (446 aa).

Residue Glu288 is the Proton donor of the active site. Residues His309 and Lys423 contribute to the active site.

It belongs to the GPI family.

It is found in the cytoplasm. The catalysed reaction is alpha-D-glucose 6-phosphate = beta-D-fructose 6-phosphate. Its pathway is carbohydrate biosynthesis; gluconeogenesis. It functions in the pathway carbohydrate degradation; glycolysis; D-glyceraldehyde 3-phosphate and glycerone phosphate from D-glucose: step 2/4. Functionally, catalyzes the reversible isomerization of glucose-6-phosphate to fructose-6-phosphate. The sequence is that of Glucose-6-phosphate isomerase from Lacticaseibacillus casei (strain BL23) (Lactobacillus casei).